We begin with the raw amino-acid sequence, 272 residues long: NADH-cytochrome b5 reductase 3 (272 aa).

Positions 11-123 (DIKYPLRLID…RGPNGLLVYQ (113 aa)) constitute an FAD-binding FR-type domain. Lysine 13 carries the N6-acetyllysine modification. At tyrosine 14 the chain carries Phosphotyrosine. Lysine 21 carries the N6-acetyllysine modification. The FAD site is built by arginine 63, proline 64, tyrosine 65, valine 80, lysine 82, and tyrosine 84. Lysine 91 bears the N6-acetyllysine mark. Residues lysine 97, methionine 98, serine 99, and threonine 156 each contribute to the FAD site.

The protein belongs to the flavoprotein pyridine nucleotide cytochrome reductase family. Component of a complex composed of cytochrome b5, NADH-cytochrome b5 reductase (CYB5R3) and MTARC2. Interacts with MTLN; the interaction is required to maintain cellular lipid composition and leads to stimulation of mitochondrial respiratory complex I activity. The cofactor is FAD.

The protein resides in the endoplasmic reticulum membrane. Its subcellular location is the mitochondrion outer membrane. The catalysed reaction is 2 Fe(III)-[cytochrome b5] + NADH = 2 Fe(II)-[cytochrome b5] + NAD(+) + H(+). In terms of biological role, catalyzes the reduction of two molecules of cytochrome b5 using NADH as the electron donor. This Sus scrofa (Pig) protein is NADH-cytochrome b5 reductase 3 (CYB5R3).